Here is a 533-residue protein sequence, read N- to C-terminus: GMP synthase [glutamine-hydrolyzing] (533 aa).

Residues Ser25–Asn215 form the Glutamine amidotransferase type-1 domain. Residue Cys102 is the Nucleophile of the active site. Catalysis depends on residues His189 and Glu191. The 193-residue stretch at Trp216–Arg408 folds into the GMPS ATP-PPase domain. Ser243–Ala249 provides a ligand contact to ATP.

Homodimer.

It catalyses the reaction XMP + L-glutamine + ATP + H2O = GMP + L-glutamate + AMP + diphosphate + 2 H(+). The protein operates within purine metabolism; GMP biosynthesis; GMP from XMP (L-Gln route): step 1/1. Functionally, catalyzes the synthesis of GMP from XMP. This Dehalococcoides mccartyi (strain ATCC BAA-2266 / KCTC 15142 / 195) (Dehalococcoides ethenogenes (strain 195)) protein is GMP synthase [glutamine-hydrolyzing].